The primary structure comprises 211 residues: tRNA (guanine-N(7)-)-methyltransferase (211 aa).

4 residues coordinate S-adenosyl-L-methionine: glutamate 44, aspartate 69, aspartate 96, and aspartate 118. Aspartate 118 is a catalytic residue. Position 122 (lysine 122) interacts with substrate. An interaction with RNA region spans residues 124–129; the sequence is RHEKRR. Substrate contacts are provided by residues aspartate 154 and 191–194; that span reads TEYE.

It belongs to the class I-like SAM-binding methyltransferase superfamily. TrmB family.

The catalysed reaction is guanosine(46) in tRNA + S-adenosyl-L-methionine = N(7)-methylguanosine(46) in tRNA + S-adenosyl-L-homocysteine. Its pathway is tRNA modification; N(7)-methylguanine-tRNA biosynthesis. Its function is as follows. Catalyzes the formation of N(7)-methylguanine at position 46 (m7G46) in tRNA. The chain is tRNA (guanine-N(7)-)-methyltransferase from Streptococcus pneumoniae (strain CGSP14).